The primary structure comprises 202 residues: MKLERKFYDRPTLEVSKDLLGKKLVHYVKGEKLSARIVEVEAYIGAIDKAAHSYNNKITERTKIMFGPPGYAYVYLIYGMYHCMNIVTEKDGVAAAVLIRAVEPVNGIETMANYRYSKPIEDLTKKQIHNLTSGPGKLCVAMNISKINNGADLCGEEMWIEADGYHNFEIVTTKRINIDYAEEAIDFPWRFYIKDNPFISRK.

This sequence belongs to the DNA glycosylase MPG family.

The protein is Putative 3-methyladenine DNA glycosylase of Alkaliphilus oremlandii (strain OhILAs) (Clostridium oremlandii (strain OhILAs)).